A 191-amino-acid chain; its full sequence is Fe/S biogenesis protein NfuA (191 aa).

Residues Cys-149 and Cys-152 each contribute to the [4Fe-4S] cluster site.

The protein belongs to the NfuA family. In terms of assembly, homodimer. Requires [4Fe-4S] cluster as cofactor.

Involved in iron-sulfur cluster biogenesis. Binds a 4Fe-4S cluster, can transfer this cluster to apoproteins, and thereby intervenes in the maturation of Fe/S proteins. Could also act as a scaffold/chaperone for damaged Fe/S proteins. This is Fe/S biogenesis protein NfuA from Serratia proteamaculans (strain 568).